Consider the following 318-residue polypeptide: Acetyl-coenzyme A carboxylase carboxyl transferase subunit alpha (318 aa).

One can recognise a CoA carboxyltransferase C-terminal domain in the interval 31–292 (DLIKEVSALE…KDAILRQLEL (262 aa)).

Belongs to the AccA family. Acetyl-CoA carboxylase is a heterohexamer composed of biotin carboxyl carrier protein (AccB), biotin carboxylase (AccC) and two subunits each of ACCase subunit alpha (AccA) and ACCase subunit beta (AccD).

It localises to the cytoplasm. It catalyses the reaction N(6)-carboxybiotinyl-L-lysyl-[protein] + acetyl-CoA = N(6)-biotinyl-L-lysyl-[protein] + malonyl-CoA. The protein operates within lipid metabolism; malonyl-CoA biosynthesis; malonyl-CoA from acetyl-CoA: step 1/1. Its function is as follows. Component of the acetyl coenzyme A carboxylase (ACC) complex. First, biotin carboxylase catalyzes the carboxylation of biotin on its carrier protein (BCCP) and then the CO(2) group is transferred by the carboxyltransferase to acetyl-CoA to form malonyl-CoA. This Hydrogenovibrio crunogenus (strain DSM 25203 / XCL-2) (Thiomicrospira crunogena) protein is Acetyl-coenzyme A carboxylase carboxyl transferase subunit alpha.